The chain runs to 295 residues: MALGNEINITNKLKRQEIFADIKHEKNKERHTMRRKRAKEERENPELREQRLKENVTQTIENTRVYDETINKEVEGDEDDLMRYFNSNSNEPPKIFLTTNVNAKKSAYEFANILIEILPNVTFVKRKFGYKLKEISDICIKRNFTDIVIINEDKKKVTGLTFIHLPEGPTFYFKLSSFVEVKKIVGHGRPTSHIPELILNNFQTRLGQTVGRLFQSILPQNPDIEGRQVITLHNQRDYIFFRRHRYVFKDNERVGLQELGPQFTLKLKRLQRGIKEETEWEHKPEMDKEKKKFYL.

The segment at 24–47 (HEKNKERHTMRRKRAKEERENPEL) is disordered. Over residues 38–47 (AKEERENPEL) the composition is skewed to basic and acidic residues. One can recognise a Brix domain in the interval 93-276 (PKIFLTTNVN…LKRLQRGIKE (184 aa)). The interval 254–271 (VGLQELGPQFTLKLKRLQ) is RNA-binding.

Part of a complex that includes BRX1, RPF1, RPF2 and SSF1 or SSF2.

The protein localises to the nucleus. It is found in the nucleolus. In terms of biological role, essential protein. Required for biogenesis of the 60S ribosomal subunit. This Saccharomyces cerevisiae (strain ATCC 204508 / S288c) (Baker's yeast) protein is Ribosome production factor 1 (RPF1).